A 178-amino-acid chain; its full sequence is Heavy metal-associated isoprenylated plant protein 30 (178 aa).

The region spanning 45–108 (LQTIDLKVRM…AVRRAGKRAE (64 aa)) is the HMA domain. Cysteine 56 and cysteine 59 together coordinate a metal cation. Position 175 is a cysteine methyl ester (cysteine 175). Cysteine 175 carries the S-farnesyl cysteine lipid modification. Residues 176-178 (SLM) constitute a propeptide, removed in mature form.

The protein belongs to the HIPP family. Interacts with ZHD3/HB21, ZHD11/HB29 and ZHD8/HB30.

Heavy-metal-binding protein. In Arabidopsis thaliana (Mouse-ear cress), this protein is Heavy metal-associated isoprenylated plant protein 30.